We begin with the raw amino-acid sequence, 275 residues long: 2,3,4,5-tetrahydropyridine-2,6-dicarboxylate N-succinyltransferase (275 aa).

The protein belongs to the transferase hexapeptide repeat family.

The protein localises to the cytoplasm. It carries out the reaction (S)-2,3,4,5-tetrahydrodipicolinate + succinyl-CoA + H2O = (S)-2-succinylamino-6-oxoheptanedioate + CoA. Its pathway is amino-acid biosynthesis; L-lysine biosynthesis via DAP pathway; LL-2,6-diaminopimelate from (S)-tetrahydrodipicolinate (succinylase route): step 1/3. This Burkholderia ambifaria (strain MC40-6) protein is 2,3,4,5-tetrahydropyridine-2,6-dicarboxylate N-succinyltransferase.